The following is a 126-amino-acid chain: Large ribosomal subunit protein uL22 (126 aa).

The protein belongs to the universal ribosomal protein uL22 family. As to quaternary structure, part of the 50S ribosomal subunit.

Its function is as follows. This protein binds specifically to 23S rRNA; its binding is stimulated by other ribosomal proteins, e.g. L4, L17, and L20. It is important during the early stages of 50S assembly. It makes multiple contacts with different domains of the 23S rRNA in the assembled 50S subunit and ribosome. Functionally, the globular domain of the protein is located near the polypeptide exit tunnel on the outside of the subunit, while an extended beta-hairpin is found that lines the wall of the exit tunnel in the center of the 70S ribosome. The polypeptide is Large ribosomal subunit protein uL22 (Jannaschia sp. (strain CCS1)).